We begin with the raw amino-acid sequence, 299 residues long: tRNA dimethylallyltransferase (299 aa).

An ATP-binding site is contributed by 11–18 (GPTAVGKT). 13–18 (TAVGKT) provides a ligand contact to substrate. The segment at 36–39 (DSQQ) is interaction with substrate tRNA.

This sequence belongs to the IPP transferase family. As to quaternary structure, monomer. Mg(2+) is required as a cofactor.

It carries out the reaction adenosine(37) in tRNA + dimethylallyl diphosphate = N(6)-dimethylallyladenosine(37) in tRNA + diphosphate. In terms of biological role, catalyzes the transfer of a dimethylallyl group onto the adenine at position 37 in tRNAs that read codons beginning with uridine, leading to the formation of N6-(dimethylallyl)adenosine (i(6)A). The polypeptide is tRNA dimethylallyltransferase (Streptococcus pyogenes serotype M18 (strain MGAS8232)).